The sequence spans 332 residues: MSSLKVSQQDKKWVNSGSVAILAYCASSILMTITNKVVMSDRTFNMNFLLLFIQSLVCVITLLVLKVLGSVNFRSFNKTDARNWFPISICLVLMIFTSSKSLQYLSVPVYTIFKNLTIIVIAYGEVLFFGSSVGNMELGSFALMIVSSLIAAHGDYLHSVERLKKMLGPNVSFSFIVNIGYFWIAANCFASALFVLLMRKRIQVTNFKDFDTMFYNNVLSLPLLLLGSYLFEDWSQENLLPHVDIDNLSTMIISGLASVAISYCSGWCVRVTSSTTYSMVGALNKLPIALTGFLFNDAARNLSSAASILLGFASGIIYAVAKQKKLQNSEKI.

The Cytoplasmic portion of the chain corresponds to 1 to 12 (MSSLKVSQQDKK). The helical transmembrane segment at 13-33 (WVNSGSVAILAYCASSILMTI) threads the bilayer. The Lumenal segment spans residues 34–47 (TNKVVMSDRTFNMN). The chain crosses the membrane as a helical span at residues 48 to 68 (FLLLFIQSLVCVITLLVLKVL). Residues 69-84 (GSVNFRSFNKTDARNW) are Cytoplasmic-facing. A helical membrane pass occupies residues 85–105 (FPISICLVLMIFTSSKSLQYL). The Lumenal segment spans residues 106–108 (SVP). A helical membrane pass occupies residues 109-129 (VYTIFKNLTIIVIAYGEVLFF). Residues 130-131 (GS) lie on the Cytoplasmic side of the membrane. A helical membrane pass occupies residues 132–152 (SVGNMELGSFALMIVSSLIAA). Over 153 to 174 (HGDYLHSVERLKKMLGPNVSFS) the chain is Lumenal. N170 carries N-linked (GlcNAc...) asparagine glycosylation. The chain crosses the membrane as a helical span at residues 175 to 195 (FIVNIGYFWIAANCFASALFV). Topologically, residues 196-211 (LLMRKRIQVTNFKDFD) are cytoplasmic. A helical membrane pass occupies residues 212 to 232 (TMFYNNVLSLPLLLLGSYLFE). Residues 233-248 (DWSQENLLPHVDIDNL) lie on the Lumenal side of the membrane. An N-linked (GlcNAc...) asparagine glycan is attached at N247. A helical transmembrane segment spans residues 249–269 (STMIISGLASVAISYCSGWCV). Residues 270-274 (RVTSS) lie on the Cytoplasmic side of the membrane. A helical transmembrane segment spans residues 275–295 (TTYSMVGALNKLPIALTGFLF). Residues 296-300 (NDAAR) are Lumenal-facing. The chain crosses the membrane as a helical span at residues 301–321 (NLSSAASILLGFASGIIYAVA). The Cytoplasmic segment spans residues 322-332 (KQKKLQNSEKI).

This sequence belongs to the TPT transporter family. SLC35D subfamily. Homooligomer.

It is found in the golgi apparatus membrane. The protein resides in the cytoplasmic vesicle membrane. Its subcellular location is the endoplasmic reticulum membrane. In terms of biological role, involved in the import of GDP-mannose from the cytoplasm into the Golgi lumen. This chain is GDP-mannose transporter 2 (VRG4-2), found in Vanderwaltozyma polyspora (strain ATCC 22028 / DSM 70294 / BCRC 21397 / CBS 2163 / NBRC 10782 / NRRL Y-8283 / UCD 57-17) (Kluyveromyces polysporus).